Consider the following 87-residue polypeptide: Cell division topological specificity factor (87 aa).

Belongs to the MinE family.

In terms of biological role, prevents the cell division inhibition by proteins MinC and MinD at internal division sites while permitting inhibition at polar sites. This ensures cell division at the proper site by restricting the formation of a division septum at the midpoint of the long axis of the cell. The sequence is that of Cell division topological specificity factor from Leptothrix cholodnii (strain ATCC 51168 / LMG 8142 / SP-6) (Leptothrix discophora (strain SP-6)).